The primary structure comprises 185 residues: Probable prefoldin subunit 3 (185 aa).

This sequence belongs to the prefoldin subunit alpha family. In terms of assembly, heterohexamer of two PFD-alpha type and four PFD-beta type subunits.

Its function is as follows. Binds specifically to cytosolic chaperonin (c-CPN) and transfers target proteins to it. Binds to nascent polypeptide chain and promotes folding in an environment in which there are many competing pathways for nonnative proteins. The polypeptide is Probable prefoldin subunit 3 (pfd-3) (Caenorhabditis elegans).